A 583-amino-acid polypeptide reads, in one-letter code: R-linalool synthase QH5, chloroplastic (583 aa).

The N-terminal 40 residues, 1 to 40 (MASISLFPYSILKQTSPLARGTAYNRIYSTKTTGITVDVA), are a transit peptide targeting the chloroplast. Positions 298, 335, 339, 476, and 479 each coordinate (2E)-geranyl diphosphate. Residues Asp335 and Asp339 each coordinate Mg(2+). The DDXXD motif signature appears at 335 to 339 (DDVYD). Residues Asp479, Thr483, and Glu487 each contribute to the Mg(2+) site. Asp492 lines the K(+) pocket.

Belongs to the terpene synthase family. Tpsb subfamily. Mg(2+) serves as cofactor. Mn(2+) is required as a cofactor. The cofactor is K(+). In terms of tissue distribution, expressed in every aerial organ except for the stem stele of mature plants. Not detected in roots.

The protein resides in the plastid. The protein localises to the chloroplast. The enzyme catalyses (2E)-geranyl diphosphate + H2O = (R)-linalool + diphosphate. The protein operates within secondary metabolite biosynthesis; terpenoid biosynthesis. Functionally, monoterpene synthase that catalyzes the formation of (3R)-linalool from geranyl diphosphate, but not from isopentenyl diphosphate, dimethylallyl diphosphate, chrysanthemyl diphosphate, farnesyl diphosphate, (+)-copalyl diphosphate or geranylgeranyl diphosphate. This is R-linalool synthase QH5, chloroplastic from Artemisia annua (Sweet wormwood).